A 192-amino-acid chain; its full sequence is Cytochrome b-245 light chain (192 aa).

Topologically, residues 2 to 7 (GQIEWA) are cytoplasmic. The helical transmembrane segment at 8-30 (MWANEQALASGLILITGGIVATA) threads the bilayer. The Extracellular portion of the chain corresponds to 31–35 (GRFTQ). A helical transmembrane segment spans residues 36–53 (WYFGAYSIAAGVLICLLE). The Cytoplasmic portion of the chain corresponds to 54–69 (YPRGKRKKGSTMERCG). Residues 70-80 (QKYLTSVVKLF) lie within the membrane without spanning it. The Cytoplasmic portion of the chain corresponds to 81–86 (GPLTRN). The helical transmembrane segment at 87-104 (YYVRAALHFLLSVPAGFL) threads the bilayer. Residue L105 is a topological domain, extracellular. Residues 106-126 (ATILGTVCLAIASVIYLLAAI) traverse the membrane as a helical segment. At 127 to 192 (RGEQWTPIEP…NPMPVTDEVV (66 aa)) the chain is on the cytoplasmic side. Positions 134–192 (IEPKPKERPQVGGTIKQPPTNPPPRPPAEVRKKPSEGEEEAASAGGPQVNPMPVTDEVV) are disordered. T147 carries the post-translational modification Phosphothreonine. Residue K149 forms a Glycyl lysine isopeptide (Lys-Gly) (interchain with G-Cter in ubiquitin) linkage. 2 positions are modified to phosphoserine: S168 and S176.

Belongs to the p22phox family. Component of the phagocyte NADPH oxidase core complex/cytochrome b558 complex, composed of CYBB (heavy chain (beta)) and CYBA (light chain (alpha)). Component of the phagocyte NADPH oxidase complex composed of an obligatory core heterodimer formed by the membrane proteins CYBA and CYBB and the cytosolic regulatory subunits NCF1/p47-phox, NCF2/p67-phox, NCF4/p40-phox and the small GTPase RAC1 or RAC2. Interacts with NCF1 (via SH3 domain). Interacts with SH3PXD2A. Interacts with DUOX1, DUOX2 and TPO. Interacts with NOX4; this interaction mediates superoxide generation. Interacts with calprotectin (S100A8/9). Interacts with GBP7. Interacts with NOXO1. Forms a heterodimer with NOX3 and is essential for activity and cell membrane localization of NOX3. Interacts with NOX1. Post-translationally, ubiquitinated at Lys-149 likely by RNF145. Phosphorylation at Thr-147 enhances NADPH oxidase activity by promoting NCF1/p47-phox binding. The strongest level of expression is found in kidney, peritoneal neutrophils and peritoneal macrophages, and a lower level in spleen and small intestine. Very low level of expression can be noted in brain, liver, testis, and heart.

The protein resides in the cell membrane. Its function is as follows. Subunit of NADPH oxidase complexes that is required for the NADPH oxidase activity that generates, in various cell types, superoxide from molecular oxygen utilizing NADPH as an electron donor. Subunit of the phagocyte NADPH oxidase complex that mediates the transfer of electrons from cytosolic NADPH to O2 to produce the superoxide anion (O2(-)). In the activated complex, electrons are first transferred from NADPH to flavin adenine dinucleotide (FAD) and subsequently transferred via two heme molecules to molecular oxygen, producing superoxide through an outer-sphere reaction. Activation of the NADPH oxidase complex is initiated by the assembly of cytosolic subunits of the NADPH oxidase complex with the core NADPH oxidase complex to form a complex at the plasma membrane or phagosomal membrane. This activation process is initiated by phosphorylation dependent binding of the cytosolic NCF1/p47-phox subunit to the C-terminus of CYBA/p22-phox. Aassociates with NOX3 to form a functional NADPH oxidase constitutively generating superoxide. In Mus musculus (Mouse), this protein is Cytochrome b-245 light chain.